A 221-amino-acid polypeptide reads, in one-letter code: Tetraspanin-2 (221 aa).

Topologically, residues 1 to 13 (MGRFRGGLRCIKY) are cytoplasmic. The chain crosses the membrane as a helical span at residues 14-34 (LLLGFNLLFWLAGSAVIAFGL). Over 35–54 (WFRFGGTMKDLSSEDKSPEY) the chain is Extracellular. Residues 55-75 (FYVGLYVLVGAGALMMTVGFF) traverse the membrane as a helical segment. The Cytoplasmic portion of the chain corresponds to 76–90 (GCCGAMRESQCVLGS). Residues 91 to 111 (FFTCLLVIFAAEVTTGVFAFI) form a helical membrane-spanning segment. The Extracellular portion of the chain corresponds to 112–188 (GKDVAIRHVQ…ETVISAKLQL (77 aa)). A glycan (N-linked (GlcNAc...) asparagine) is linked at N139. The chain crosses the membrane as a helical span at residues 189 to 209 (IGIVGIGIAGLTIFGMIFSMV). The Cytoplasmic portion of the chain corresponds to 210–221 (LCCAIRNSRDVI).

This sequence belongs to the tetraspanin (TM4SF) family.

It is found in the membrane. Functionally, may play a role in signalling in oligodendrocytes in the early stages of their terminal differentiation into myelin-forming glia and may also function in stabilizing the mature sheath. This chain is Tetraspanin-2 (Tspan2), found in Mus musculus (Mouse).